We begin with the raw amino-acid sequence, 1433 residues long: Bacillopeptidase F (1433 aa).

The signal sequence occupies residues 1–30; the sequence is MRKKTKNRLISSVLSTVVISSLLFPGAAGA. Positions 31-194 are excised as a propeptide; the sequence is SSKVTSPSVK…NMKKAQKAIK (164 aa). The Inhibitor I9 domain maps to 68–177; that stretch reads TFLIKFKDLA…KVLPNEKRQL (110 aa). Residues 200–512 enclose the Peptidase S8 domain; sequence EWNVDQIDAP…HGLVNAFDAV (313 aa). Residues Asp227, His274, and Ser452 each act as charge relay system in the active site. Positions 756-1433 are excised as a propeptide; the sequence is SAYKGQNIQV…NGKLNMNTEN (678 aa). A disordered region spans residues 800-830; sequence KLGVEKPSGKQKKKPVNPKKAKPSANTAVKH. Over residues 808–821 the composition is skewed to basic residues; sequence GKQKKKPVNPKKAK.

This sequence belongs to the peptidase S8 family.

It localises to the secreted. In Bacillus subtilis (strain 168), this protein is Bacillopeptidase F (bpr).